The following is a 1514-amino-acid chain: MKDKQKRKKERTWAEAARLVLENYSDAPMTPKQILQVIEAEGLKEMRSGTSPLACLNAMLHSNSRGGEGLFYKLPGRISLFTLKKDAVQWSRNAATVDGDEPEDSADVESCGSNEASTVSGENDVSLDETSSNASCSTESQSRPLSNPRDSHRASSQANKQKKRTGVMLPRVVLTPLKVNGAHVEPASGFSGRHADGESGSPSSSSSGSLALGNSAIRGQAEVTRDPAPLLRGFRKPATGQMKRNRGEEVDFETPGSILVNTNLRALINSRTFHALPLHFQQQLLLLLPEVDRQVGTDGLLRLSGSALNNEFFTHAAQSWRERLADGEFTHEMQVRLRQEMEKEKKVEQWKEKFFEDYYGQKLGLTKEESLQQKEVQEEAKVKSGLCVSGESVRPQRGPNTRQRDGHFKKRSRPDLRTRSRRNIYKKQEPEQAGVAKDASAAPDVSLSKDTKTDLAGVNSTPGPDVSSATSGQEGPKCPSEPVASQIQAERDNLACASASPDRIPTLPQDTVDQETKDQKRKSFEQEASASFPEKKPRLEDRQSFRNTIESVHTEKPQPTKEEPKVPPIRIQLSRIKPPWVAKGRPTYQICPRIVPITESSCRGWTGARTLADIKARALQARGARGYHCNRETATTAIGGGGGPGGGGSGAIDEGGGRDSSSGDGSEACGHPEPRGAPSTSGESASDLQRTQLLPPCPLNGEHTPAEAAMPRARREDSASLRKEESCLLKRVPGVLTSGLEDASQPPIAPTGDQPCQALPPLSSQTPVAEMLTEQPKLLLDDRTECESSREDQGPTIPSESSSGRFPLGDLLGGGSDQAFDNMKEPVSMTPTFISELSLANYLQDRPDDDGLGLGATGLLIRESSRQEALTEAFASGSPTSWVPILSNYEVIKTSDPESRENIPCPEPQDEKEWERAVPLIAATESVPQPESCISHWTPPPAAVGSTGSDSEQVDLERLEMNGISEAPSPHSESTDTASDSEGHLSEDSSEVDASEVTVVKGSLGGDEKQDWDPSASLSKVNNDLSVLTRTGGVAASQSWVSRVCSVPHKIPDSLLLSSTECQPRSVCPLRPGSSVEVTNPLVMHLLHGNLPLEKVLPPGHRSSRLESSQLPLREQSQDRGTLQGTGENNRLAARINPGSAQTLKESILAQSYGASAGLVRAMASKAPAMSQKIAKMVTSLDSQHPETELTPSSGNLEEIDSKEHLSSFLCEEQKEGHSLSQGSDPGAAPGQCLGDHTTSKVPCFSSTNVSLSFGSEQTDGTLSDQNNAGGHEKKLFGPGNTVTTLQCPRSEEQTPLPAEVPPVFPSRKIEPSKNSVSGGVQTTRENRMPKPPPVSADSIKTEQTFLRDPIKADAENRKAAGYSSLELVGHLQGMPFVVDLPFWKLPREPGKGFSQPLEPSSIPSQLNIKQALYGKLSKLQLSPTSFNYSSSSATFPKGLAGGVVQLSHKASFGTGHTASLSLQMFADSSAVESISLQCACSLKAMIMCQGCGAFCHDDCIGPSKLCVLCLVVR.

In terms of domain architecture, HTH HARE-type spans 11 to 86; it reads RTWAEAARLV…RISLFTLKKD (76 aa). Disordered regions lie at residues 95 to 170 and 183 to 249; these read ATVD…VMLP and HVEP…RGEE. Residues 98-107 are compositionally biased toward acidic residues; that stretch reads DGDEPEDSAD. Residues 111–145 are compositionally biased toward polar residues; sequence CGSNEASTVSGENDVSLDETSSNASCSTESQSRPL. Residues 199-209 show a composition bias toward low complexity; that stretch reads SGSPSSSSSGS. Positions 243–246 are interaction with nucleosomal DNA forming a DNA clamp with BAP1; sequence KRNR. The 110-residue stretch at 255-364 folds into the DEUBAD domain; the sequence is PGSILVNTNL…FEDYYGQKLG (110 aa). Positions 284 to 288 match the LXXLL motif 1 motif; sequence LLLLL. Residues 300 to 655 are interaction with NCOA1; sequence LLRLSGSALN…GGGSGAIDEG (356 aa). Residues 310-315 carry the NEF motif motif; sequence NEFFTH. An interaction with nucleosomal DNA region spans residues 336–346; the sequence is RLRQEMEKEKK. Disordered regions lie at residues 378–543, 635–823, 895–914, 926–952, and 964–995; these read EEAK…EDRQ, TTAI…FDNM, SDPE…EKEW, SVPQ…SDSE, and ISEA…VDAS. The Nuclear localization signal signature appears at 408-415; it reads FKKRSRPD. Residues 458–473 are compositionally biased toward polar residues; sequence VNSTPGPDVSSATSGQ. Phosphoserine is present on residues S498 and S500. 2 stretches are compositionally biased toward basic and acidic residues: residues 514-525 and 533-543; these read QETKDQKRKSFE and PEKKPRLEDRQ. Positions 638 to 654 are enriched in gly residues; that stretch reads IGGGGGPGGGGSGAIDE. Residues 678 to 692 are compositionally biased toward polar residues; that stretch reads PSTSGESASDLQRTQ. Composition is skewed to basic and acidic residues over residues 713-728 and 779-793; these read ARRE…ESCL and LLDD…REDQ. An LXXLL motif 2 motif is present at residues 808–812; it reads LGDLL. A compositionally biased stretch (polar residues) spans 971–980; sequence HSESTDTASD. A required for interaction with RARA region spans residues 1082–1087; sequence LVMHLL. Disordered regions lie at residues 1095 to 1131, 1213 to 1234, and 1256 to 1338; these read KVLP…ENNR, EQKE…GQCL, and SEQT…VSAD. The span at 1119 to 1129 shows a compositional bias: polar residues; the sequence is DRGTLQGTGEN. Composition is skewed to polar residues over residues 1256–1269 and 1313–1324; these read SEQT…QNNA and SKNSVSGGVQTT. The PHD-type; atypical zinc finger occupies 1476-1513; sequence SLQCACSLKAMIMCQGCGAFCHDDCIGPSKLCVLCLVV.

Belongs to the Asx family. Core component of the polycomb repressive deubiquitinase (PR-DUB) complex, at least composed of BAP1, one of ASXL1, ASXL2 or (probably) ASXL3, and one of MBD5 or MBD6. Distinct combinations of ASXL and MBD proteins may preferentially bind specific histone modification marks. The PR-DUB core associates with a number of accessory proteins, including FOXK1, FOXK2, KDM1B, HCFC1 and OGT; KDM1B specifically associates with ASXL2 PR-DUB complexes. Interacts (via DEUBAD domain) with BAP1 (via ULD domain); the interaction is direct and forms a ubiquitin binding cleft. The interaction with BAP1 is important for maintaining BAP1 stability. Together with BAP1, associates (via DEUBAD domain) with nucleosomes; interacts with nucleosomal DNA and stabilizes the orientation of the nucleosome to line up the PR-DUB complex active site with its H2AK118ub1 substrate. Interacts (via PHD domain) with MBD5 and MBD6 (via MBD domain); the interaction is probably direct and mediates association of MBD proteins with the PR-DUB core. Interacts with RARA, RXRA. Interacts with NCOA1. Interacts with PPARA and PPARG. Ubiquitinated by TRIP12, leading to its subsequent degradation following binding of N(6)-methyladenine methylated DNA (6mA).

It is found in the nucleus. In terms of biological role, probable Polycomb group (PcG) protein involved in transcriptional regulation mediated by ligand-bound nuclear hormone receptors, such as retinoic acid receptors (RARs) and peroxisome proliferator-activated receptor gamma (PPARG). Acts as a coactivator of RARA and RXRA through association with NCOA1. Acts as a corepressor for PPARG and suppresses its adipocyte differentiation-inducing activity. Non-catalytic component of the PR-DUB complex, a complex that specifically mediates deubiquitination of histone H2A monoubiquitinated at 'Lys-119' (H2AK119ub1). Acts as a sensor of N(6)-methyladenine methylation on DNA (6mA): recognizes and binds 6mA DNA, leading to its ubiquitination and degradation by TRIP12, thereby inactivating the PR-DUB complex and regulating Polycomb silencing. The PR-DUB complex is an epigenetic regulator of gene expression and acts as a transcriptional coactivator, affecting genes involved in development, cell communication, signaling, cell proliferation and cell viability. ASXL1, ASXL2 and ASXL3 function redundantly in the PR-DUB complex. The ASXL proteins are essential for chromatin recruitment and transcriptional activation of associated genes. ASXL1 and ASXL2 are important for BAP1 protein stability. Together with BAP1, negatively regulates epithelial-mesenchymal transition (EMT) of trophoblast stem cells during placental development by regulating genes involved in epithelial cell integrity, cell adhesion and cytoskeletal organization. This is Polycomb group protein ASXL1 (Asxl1) from Mus musculus (Mouse).